The following is a 612-amino-acid chain: UPF0329 protein ECU05_1680/ECU11_0050 (612 aa).

Over residues 304–330 the composition is skewed to basic and acidic residues; it reads RQRREMEKKEEEKKKEEEKKKEEEKRK. Residues 304-424 are disordered; it reads RQRREMEKKE…RKRYKIHRRV (121 aa). A compositionally biased stretch (basic residues) spans 331–349; that stretch reads EEKKKKKEEKKEEKKKKKE. The span at 350-388 shows a compositional bias: basic and acidic residues; it reads EKKEEKKEEKKEEKKEEKKEEKKEEKKEEKSGKSLREGE.

The protein belongs to the UPF0329 family.

The protein is UPF0329 protein ECU05_1680/ECU11_0050 of Encephalitozoon cuniculi (strain GB-M1) (Microsporidian parasite).